The chain runs to 237 residues: Opacity protein opA57 (237 aa).

A signal peptide is located at residue Ala1.

This sequence belongs to the opacity porin family.

The protein localises to the cell outer membrane. In terms of biological role, implicated in a number of adherence functions. OPA proteins are implicated in pathogenesis and are subject to phase variation. This chain is Opacity protein opA57 (opaK), found in Neisseria gonorrhoeae.